The following is a 190-amino-acid chain: Threonylcarbamoyl-AMP synthase (190 aa).

The YrdC-like domain maps to Ala7–Gly190.

Belongs to the SUA5 family. TsaC subfamily.

Its subcellular location is the cytoplasm. The enzyme catalyses L-threonine + hydrogencarbonate + ATP = L-threonylcarbamoyladenylate + diphosphate + H2O. In terms of biological role, required for the formation of a threonylcarbamoyl group on adenosine at position 37 (t(6)A37) in tRNAs that read codons beginning with adenine. Catalyzes the conversion of L-threonine, HCO(3)(-)/CO(2) and ATP to give threonylcarbamoyl-AMP (TC-AMP) as the acyladenylate intermediate, with the release of diphosphate. In Cronobacter sakazakii (strain ATCC BAA-894) (Enterobacter sakazakii), this protein is Threonylcarbamoyl-AMP synthase.